Reading from the N-terminus, the 474-residue chain is MKKLTNDFGNIIADNQNSLSAGAKGPLLMQDYLLLEKLAHQNRERIPERTVHAKGSGAYGEIKITADLSAYTKAKIFQKGEVTPLFLRFSTVAGEAGAADAERDVRGFAIKFYTKEGNWDLVGNNTPTFFIRDAYKFPDFIHTQKRDPRTHLRSNNAAWDFWSLCPESLHQVTILMSDRGIPASYRHMHGFGSHTYSFINDKNERFWVKFHFKTQQGIKNLTNQEAAELIAKDRESHQRDLYNAIENKDFPKWKVQVQILAEKDIEKLGFNPFDLTKIWPHSFVPLMDIGEMILNKNPQNYFNEVEQAAFSPSNIVPGIGFSPDKMLQARIFSYPDAQRYRIGTNYHLLPVNRAKSEVNTYNVAGAMNFDSYKNDAAYYEPNSYDNSPKEDKSYLEPDLVLEGVAQRYAPLDNDFYTQPRALFNLMNDDQKTQLFHNIAASMEGVDEKIITRALKHFEKISPDYAKGIKKALEK.

Residues His-52 and Asn-124 contribute to the active site. Position 334 (Tyr-334) interacts with heme.

The protein belongs to the catalase family. Heme is required as a cofactor.

The enzyme catalyses 2 H2O2 = O2 + 2 H2O. Its function is as follows. Decomposes hydrogen peroxide into water and oxygen; serves to protect cells from the toxic effects of hydrogen peroxide. In Campylobacter jejuni subsp. jejuni serotype O:2 (strain ATCC 700819 / NCTC 11168), this protein is Catalase (katA).